A 366-amino-acid polypeptide reads, in one-letter code: S-adenosylmethionine synthase 1 (366 aa).

Glu-18 serves as a coordination point for K(+). L-methionine contacts are provided by Glu-31 and Gln-74. Residues 142–144 (DGN), 210–213 (SGRF), Asp-221, 227–228 (RK), Ala-244, Lys-248, and Lys-252 each bind ATP. Asp-221 is an L-methionine binding site. Lys-252 contacts L-methionine.

It belongs to the AdoMet synthase family. As to quaternary structure, homotetramer. Requires Mn(2+) as cofactor. Mg(2+) serves as cofactor. It depends on Co(2+) as a cofactor. The cofactor is K(+).

It localises to the cytoplasm. It carries out the reaction L-methionine + ATP + H2O = S-adenosyl-L-methionine + phosphate + diphosphate. It participates in amino-acid biosynthesis; S-adenosyl-L-methionine biosynthesis; S-adenosyl-L-methionine from L-methionine: step 1/1. Catalyzes the formation of S-adenosylmethionine from methionine and ATP. The reaction comprises two steps that are both catalyzed by the same enzyme: formation of S-adenosylmethionine (AdoMet) and triphosphate, and subsequent hydrolysis of the triphosphate. In Pisum sativum (Garden pea), this protein is S-adenosylmethionine synthase 1 (SAMS1).